Reading from the N-terminus, the 303-residue chain is Acetaldehyde dehydrogenase 1 (303 aa).

Cys-130 serves as the catalytic Acyl-thioester intermediate. Residues Ser-161–Asn-169 and Asn-272 contribute to the NAD(+) site.

Belongs to the acetaldehyde dehydrogenase family.

It carries out the reaction acetaldehyde + NAD(+) + CoA = acetyl-CoA + NADH + H(+). The chain is Acetaldehyde dehydrogenase 1 from Methylibium petroleiphilum (strain ATCC BAA-1232 / LMG 22953 / PM1).